The primary structure comprises 405 residues: Adenylosuccinate synthetase (405 aa).

Residues 12-18 (GDEGKGK) and 40-42 (GHT) contribute to the GTP site. The active-site Proton acceptor is the Asp-13. Residues Asp-13 and Gly-40 each coordinate Mg(2+). Residues 13–16 (DEGK), 38–41 (NAGH), Thr-121, Arg-135, Gln-213, Thr-228, and Arg-297 each bind IMP. His-41 acts as the Proton donor in catalysis. 293–299 (TTTGRPR) is a binding site for substrate. Residues Arg-299, 325–327 (KMD), and 390–392 (SAG) each bind GTP.

Belongs to the adenylosuccinate synthetase family. In terms of assembly, homodimer. It depends on Mg(2+) as a cofactor.

The protein resides in the cytoplasm. The enzyme catalyses IMP + L-aspartate + GTP = N(6)-(1,2-dicarboxyethyl)-AMP + GDP + phosphate + 2 H(+). It participates in purine metabolism; AMP biosynthesis via de novo pathway; AMP from IMP: step 1/2. Functionally, plays an important role in the de novo pathway of purine nucleotide biosynthesis. Catalyzes the first committed step in the biosynthesis of AMP from IMP. This chain is Adenylosuccinate synthetase, found in Deinococcus radiodurans (strain ATCC 13939 / DSM 20539 / JCM 16871 / CCUG 27074 / LMG 4051 / NBRC 15346 / NCIMB 9279 / VKM B-1422 / R1).